The following is a 364-amino-acid chain: Spermidine/putrescine import ATP-binding protein PotA (364 aa).

In terms of domain architecture, ABC transporter spans I10–I244. Residue G46–T53 participates in ATP binding.

Belongs to the ABC transporter superfamily. Spermidine/putrescine importer (TC 3.A.1.11.1) family. As to quaternary structure, the complex is composed of two ATP-binding proteins (PotA), two transmembrane proteins (PotB and PotC) and a solute-binding protein (PotD).

It localises to the cell inner membrane. The catalysed reaction is ATP + H2O + polyamine-[polyamine-binding protein]Side 1 = ADP + phosphate + polyamineSide 2 + [polyamine-binding protein]Side 1.. In terms of biological role, part of the ABC transporter complex PotABCD involved in spermidine/putrescine import. Responsible for energy coupling to the transport system. The polypeptide is Spermidine/putrescine import ATP-binding protein PotA (Mesorhizobium japonicum (strain LMG 29417 / CECT 9101 / MAFF 303099) (Mesorhizobium loti (strain MAFF 303099))).